The chain runs to 451 residues: C4-dicarboxylate transport protein (451 aa).

9 consecutive transmembrane segments (helical) span residues 17–37 (SLYV…HFYP), 53–73 (LIKM…IAGM), 85–105 (LALL…LIVV), 153–173 (AFAK…GFAL), 193–213 (VLFT…FGAM), 231–251 (LMGS…GLIA), 306–326 (GYSF…VFIA), 339–359 (ITLL…TGSG), and 361–381 (IVLA…LALI).

Belongs to the dicarboxylate/amino acid:cation symporter (DAACS) (TC 2.A.23) family.

Its subcellular location is the cell inner membrane. Functionally, responsible for the transport of dicarboxylates such as succinate, fumarate, and malate from the periplasm across the membrane. This is C4-dicarboxylate transport protein from Paracidovorax citrulli (strain AAC00-1) (Acidovorax citrulli).